The primary structure comprises 735 residues: Lebercilin-like protein (735 aa).

Disordered regions lie at residues 12 to 54 (TEAH…NGSV) and 91 to 115 (EKPLAKAKEKRKYNAGKLPQPRGQK). Low complexity predominate over residues 43 to 53 (QSQNSQASNGS). A coiled-coil region spans residues 205 to 335 (TAKHQNEVKN…QQKLKEKDRE (131 aa)). 4 disordered regions span residues 356-379 (YPKVSSTKSVQADRKSLPSVNMRH), 473-597 (SKEV…PRKH), 632-657 (KHRSEQELRLEPAGYEPSFGKGAGAR), and 685-735 (GRAG…KTVV). Positions 487–525 (TPRRPKENKEDQEKRAIPAEAEPTAKESEAHKDAEDKAL) are enriched in basic and acidic residues. The span at 528–541 (AAGNAGDAGDAGDA) shows a compositional bias: low complexity. Composition is skewed to basic and acidic residues over residues 542–553 (GNDREVVGEHKV), 573–588 (EVHGAGEAPRDVEPGR), and 632–641 (KHRSEQELRL). The segment covering 689 to 707 (SSDSEAVSKSPQTGPQASA) has biased composition (polar residues).

The protein belongs to the LCA5 family.

The sequence is that of Lebercilin-like protein from Mus musculus (Mouse).